The following is a 559-amino-acid chain: Potassium-transporting ATPase potassium-binding subunit (559 aa).

Helical transmembrane passes span 5-25, 27-47, 63-83, 132-152, 170-190, 253-273, 283-303, 327-347, 356-376, 379-399, 416-436, 484-504, and 524-544; these read GFLL…PLGS, LARL…RILW, LLAL…LLFW, GLTV…FALI, LVRI…LFFI, LAQM…FGEA, LLWA…WAEV, FGVL…CGAV, ALGG…FGGV, GLYG…LMIG, MTAL…ALAM, LLAF…MAIA, and GALF…LTFI.

This sequence belongs to the KdpA family. The system is composed of three essential subunits: KdpA, KdpB and KdpC.

Its subcellular location is the cell inner membrane. In terms of biological role, part of the high-affinity ATP-driven potassium transport (or Kdp) system, which catalyzes the hydrolysis of ATP coupled with the electrogenic transport of potassium into the cytoplasm. This subunit binds the periplasmic potassium ions and delivers the ions to the membrane domain of KdpB through an intramembrane tunnel. The polypeptide is Potassium-transporting ATPase potassium-binding subunit (Salmonella newport (strain SL254)).